The primary structure comprises 394 residues: Putative serine protease HhoA (394 aa).

The signal sequence occupies residues 1–24 (MKYPTWLRRIGGYLLAFAVGTAFG). One can recognise a PDZ domain in the interval 293–377 (MMNITVDQAQ…ALKLDLLRGD (85 aa)).

It belongs to the peptidase S1C family.

Its subcellular location is the periplasm. In terms of biological role, a putative protease, its function overlaps that of the related putative proteases HhoB and HtrA. The sequence is that of Putative serine protease HhoA (hhoA) from Synechocystis sp. (strain ATCC 27184 / PCC 6803 / Kazusa).